We begin with the raw amino-acid sequence, 425 residues long: Riboflavin biosynthesis protein RibBA (425 aa).

The segment at 1–204 (MTRLDSVERA…IADLIEWRRK (204 aa)) is DHBP synthase. D-ribulose 5-phosphate contacts are provided by residues 28–29 (RE), D33, 141–145 (RPGHT), and E165. E29 is a Mg(2+) binding site. H144 contributes to the Mg(2+) binding site. Residues 205 to 425 (HEKHIERIAE…HLPGEFGGAL (221 aa)) are GTP cyclohydrolase II. Residue 259-263 (RVHSE) participates in GTP binding. 3 residues coordinate Zn(2+): C264, C275, and C277. Residues Q280, 303-305 (EGR), and T325 each bind GTP. The Proton acceptor; for GTP cyclohydrolase activity role is filled by D337. Residue R339 is the Nucleophile; for GTP cyclohydrolase activity of the active site. The GTP site is built by T360 and K365.

This sequence in the N-terminal section; belongs to the DHBP synthase family. It in the C-terminal section; belongs to the GTP cyclohydrolase II family. Requires Mg(2+) as cofactor. The cofactor is Mn(2+). Zn(2+) is required as a cofactor.

It catalyses the reaction D-ribulose 5-phosphate = (2S)-2-hydroxy-3-oxobutyl phosphate + formate + H(+). It carries out the reaction GTP + 4 H2O = 2,5-diamino-6-hydroxy-4-(5-phosphoribosylamino)-pyrimidine + formate + 2 phosphate + 3 H(+). It functions in the pathway cofactor biosynthesis; riboflavin biosynthesis; 2-hydroxy-3-oxobutyl phosphate from D-ribulose 5-phosphate: step 1/1. The protein operates within cofactor biosynthesis; riboflavin biosynthesis; 5-amino-6-(D-ribitylamino)uracil from GTP: step 1/4. In terms of biological role, catalyzes the conversion of D-ribulose 5-phosphate to formate and 3,4-dihydroxy-2-butanone 4-phosphate. Catalyzes the conversion of GTP to 2,5-diamino-6-ribosylamino-4(3H)-pyrimidinone 5'-phosphate (DARP), formate and pyrophosphate. This is Riboflavin biosynthesis protein RibBA from Mycobacterium avium (strain 104).